The chain runs to 506 residues: CTL-like protein DDB_G0269978 (506 aa).

N-linked (GlcNAc...) asparagine glycans are attached at residues asparagine 15 and asparagine 41. The next 12 helical transmembrane spans lie at 91–111 (LLYS…TVIA), 126–146 (LQGL…FLIW), 161–181 (SFFS…GNGW), 182–202 (YSWA…YFAF), 226–246 (TLLV…IWLF), 256–276 (SYWT…LYWT), 279–299 (VITY…YFFA), 323–343 (FGSI…QFIC), 345–367 (GFAR…ALIF), 371–393 (LYTF…CNSS), 416–436 (ITML…VTMI), and 447–467 (WLYV…DIIF).

The protein belongs to the CTL (choline transporter-like) family.

Its subcellular location is the membrane. This chain is CTL-like protein DDB_G0269978, found in Dictyostelium discoideum (Social amoeba).